We begin with the raw amino-acid sequence, 81 residues long: MSHSVKIYDTCIGCTQCVRACPTDVLEMIPWDGCKAKQIASAPRTEDCVGCKRCESACPTDFLSVRVSLWNETTRSMGLAY.

2 4Fe-4S ferredoxin-type domains span residues 2–31 and 39–68; these read SHSVKIYDTCIGCTQCVRACPTDVLEMIPW and IASAPRTEDCVGCKRCESACPTDFLSVRVS. Cys11, Cys14, Cys17, Cys21, Cys48, Cys51, Cys54, and Cys58 together coordinate [4Fe-4S] cluster.

The eukaryotic PSI reaction center is composed of at least 11 subunits. [4Fe-4S] cluster serves as cofactor.

It localises to the plastid. It is found in the chloroplast thylakoid membrane. It catalyses the reaction reduced [plastocyanin] + hnu + oxidized [2Fe-2S]-[ferredoxin] = oxidized [plastocyanin] + reduced [2Fe-2S]-[ferredoxin]. In terms of biological role, apoprotein for the two 4Fe-4S centers FA and FB of photosystem I (PSI); essential for photochemical activity. FB is the terminal electron acceptor of PSI, donating electrons to ferredoxin. The C-terminus interacts with PsaA/B/D and helps assemble the protein into the PSI complex. Required for binding of PsaD and PsaE to PSI. PSI is a plastocyanin-ferredoxin oxidoreductase, converting photonic excitation into a charge separation, which transfers an electron from the donor P700 chlorophyll pair to the spectroscopically characterized acceptors A0, A1, FX, FA and FB in turn. This is Photosystem I iron-sulfur center from Daucus carota (Wild carrot).